The sequence spans 78 residues: RNA-binding protein Hfq (78 aa).

A Sm domain is found at 10-69 (DPFLNTLRKEHVPVSIYLVNGIKLQGQIESFDQYVVLLRNTVTQMVYKHAISTVVPARAV).

Belongs to the Hfq family. In terms of assembly, homohexamer.

RNA chaperone that binds small regulatory RNA (sRNAs) and mRNAs to facilitate mRNA translational regulation in response to envelope stress, environmental stress and changes in metabolite concentrations. Also binds with high specificity to tRNAs. This is RNA-binding protein Hfq from Bordetella bronchiseptica (strain ATCC BAA-588 / NCTC 13252 / RB50) (Alcaligenes bronchisepticus).